Consider the following 209-residue polypeptide: 3-demethoxyubiquinol 3-hydroxylase (209 aa).

Fe cation is bound by residues glutamate 58, glutamate 88, histidine 91, glutamate 140, glutamate 172, and histidine 175.

This sequence belongs to the COQ7 family. It depends on Fe cation as a cofactor.

The protein localises to the cell membrane. It carries out the reaction a 5-methoxy-2-methyl-3-(all-trans-polyprenyl)benzene-1,4-diol + AH2 + O2 = a 3-demethylubiquinol + A + H2O. It functions in the pathway cofactor biosynthesis; ubiquinone biosynthesis. Functionally, catalyzes the hydroxylation of 2-nonaprenyl-3-methyl-6-methoxy-1,4-benzoquinol during ubiquinone biosynthesis. The sequence is that of 3-demethoxyubiquinol 3-hydroxylase from Polaromonas naphthalenivorans (strain CJ2).